Here is a 172-residue protein sequence, read N- to C-terminus: Probable chorismate pyruvate-lyase (172 aa).

4 residues coordinate substrate: Met37, Arg79, Leu117, and Glu158.

This sequence belongs to the UbiC family.

The protein localises to the cytoplasm. The catalysed reaction is chorismate = 4-hydroxybenzoate + pyruvate. It functions in the pathway cofactor biosynthesis; ubiquinone biosynthesis. Functionally, removes the pyruvyl group from chorismate, with concomitant aromatization of the ring, to provide 4-hydroxybenzoate (4HB) for the ubiquinone pathway. The chain is Probable chorismate pyruvate-lyase from Bartonella quintana (strain Toulouse) (Rochalimaea quintana).